The following is a 129-amino-acid chain: Aspartate 1-decarboxylase (129 aa).

Residue serine 25 is the Schiff-base intermediate with substrate; via pyruvic acid of the active site. The residue at position 25 (serine 25) is a Pyruvic acid (Ser). Threonine 57 is a binding site for substrate. Catalysis depends on tyrosine 58, which acts as the Proton donor. 73–75 (GAA) contributes to the substrate binding site.

The protein belongs to the PanD family. Heterooctamer of four alpha and four beta subunits. Requires pyruvate as cofactor. Is synthesized initially as an inactive proenzyme, which is activated by self-cleavage at a specific serine bond to produce a beta-subunit with a hydroxyl group at its C-terminus and an alpha-subunit with a pyruvoyl group at its N-terminus.

Its subcellular location is the cytoplasm. The catalysed reaction is L-aspartate + H(+) = beta-alanine + CO2. It participates in cofactor biosynthesis; (R)-pantothenate biosynthesis; beta-alanine from L-aspartate: step 1/1. Catalyzes the pyruvoyl-dependent decarboxylation of aspartate to produce beta-alanine. The polypeptide is Aspartate 1-decarboxylase (Prosthecochloris aestuarii (strain DSM 271 / SK 413)).